The chain runs to 1393 residues: DNA-directed RNA polymerase subunit beta (1393 aa).

Belongs to the RNA polymerase beta chain family. As to quaternary structure, the RNAP catalytic core consists of 2 alpha, 1 beta, 1 beta' and 1 omega subunit. When a sigma factor is associated with the core the holoenzyme is formed, which can initiate transcription.

The enzyme catalyses RNA(n) + a ribonucleoside 5'-triphosphate = RNA(n+1) + diphosphate. DNA-dependent RNA polymerase catalyzes the transcription of DNA into RNA using the four ribonucleoside triphosphates as substrates. This Rhodospirillum rubrum (strain ATCC 11170 / ATH 1.1.1 / DSM 467 / LMG 4362 / NCIMB 8255 / S1) protein is DNA-directed RNA polymerase subunit beta.